The chain runs to 191 residues: Potassium-transporting ATPase KdpC subunit (191 aa).

The chain crosses the membrane as a helical span at residues 6–26; that stretch reads PALVLFILLTLLTGGVYPLLT.

It belongs to the KdpC family. The system is composed of three essential subunits: KdpA, KdpB and KdpC.

The protein resides in the cell inner membrane. Its function is as follows. Part of the high-affinity ATP-driven potassium transport (or Kdp) system, which catalyzes the hydrolysis of ATP coupled with the electrogenic transport of potassium into the cytoplasm. This subunit acts as a catalytic chaperone that increases the ATP-binding affinity of the ATP-hydrolyzing subunit KdpB by the formation of a transient KdpB/KdpC/ATP ternary complex. The chain is Potassium-transporting ATPase KdpC subunit from Klebsiella pneumoniae (strain 342).